The chain runs to 189 residues: Elongation factor P (189 aa).

Lys-34 carries the N6-(3,6-diaminohexanoyl)-5-hydroxylysine modification.

Belongs to the elongation factor P family. In terms of processing, may be beta-lysylated on the epsilon-amino group of Lys-34 by the combined action of EpmA and EpmB, and then hydroxylated on the C5 position of the same residue by EpmC (if this protein is present). Lysylation is critical for the stimulatory effect of EF-P on peptide-bond formation. The lysylation moiety may extend toward the peptidyltransferase center and stabilize the terminal 3-CCA end of the tRNA. Hydroxylation of the C5 position on Lys-34 may allow additional potential stabilizing hydrogen-bond interactions with the P-tRNA.

It is found in the cytoplasm. It functions in the pathway protein biosynthesis; polypeptide chain elongation. Involved in peptide bond synthesis. Alleviates ribosome stalling that occurs when 3 or more consecutive Pro residues or the sequence PPG is present in a protein, possibly by augmenting the peptidyl transferase activity of the ribosome. Modification of Lys-34 is required for alleviation. This chain is Elongation factor P, found in Baumannia cicadellinicola subsp. Homalodisca coagulata.